The sequence spans 1896 residues: Trinucleotide repeat-containing gene 6A protein (1896 aa).

Basic and acidic residues-rich tracts occupy residues 1–21 and 39–57; these read MREL…RDLV and KKKE…KVPE. Disordered stretches follow at residues 1 to 137, 159 to 209, 222 to 250, and 257 to 276; these read MREL…LLKR, SESS…DCST, EAWP…SESE, and ASGN…GLGS. The tract at residues 1 to 917 is interaction with argonaute family proteins; that stretch reads MRELEAKATK…GDPPKCNQSL (917 aa). 2 stretches are compositionally biased toward low complexity: residues 69-93 and 101-113; these read ANSD…ASNQ and QQPQ…QQPQ. Residues 125 to 137 show a composition bias toward basic residues; the sequence is RFRHQEHKQLLKR. The segment at 239–488 is sufficient for interaction with AGO1, AGO3 and AGO4; the sequence is IDADSASNSE…QAPSVMNGTS (250 aa). 5 sufficient for interaction with AGO2 regions span residues 255–331, 303–384, 325–424, 394–480, and 487–736; these read VMAS…NAWG, GALI…STIG, NRMN…KVSF, SKVS…QIQA, and TSLS…NGTE. Polar residues-rich tracts occupy residues 396 to 410 and 417 to 429; these read VSGS…SLQE and SGTQ…GQPQ. 5 disordered regions span residues 396–461, 548–683, 703–998, 1011–1126, and 1143–1182; these read VSGS…NELP, FQVN…RRKI, LSNS…DPSK, IPEA…PTGW, and QELN…NKQE. The span at 430–443 shows a compositional bias: low complexity; it reads NITTETTGPNNTTN. Over residues 444–461 the composition is skewed to polar residues; sequence FMTSSLPNSGSVQNNELP. Positions 551 to 1279 are sufficient for interaction with AGO1 and AGO4; that stretch reads NTNKGGGVWE…MFGVGNTAAQ (729 aa). Over residues 573-584 the composition is skewed to gly residues; sequence SGNGANSGGSRR. Composition is skewed to polar residues over residues 591 to 617 and 635 to 647; these read QNTG…SANG and GSAT…QNSV. Over residues 665 to 683 the composition is skewed to basic and acidic residues; that stretch reads GRLEEKVTGESQSRDRRKI. Over residues 703 to 722 the composition is skewed to polar residues; sequence LSNSGWGQTPIKQNTAWDTE. Basic and acidic residues predominate over residues 723–733; the sequence is TSPRGERKTDN. At Ser724 the chain carries Phosphoserine. The span at 738–766 shows a compositional bias: polar residues; sequence WGSSATQTFNSGACTDKTSPNSNDTSSVS. Residues 858–871 are compositionally biased toward low complexity; sequence SSSGGSDSDRSISG. Ser863 is modified (phosphoserine). Composition is skewed to polar residues over residues 876–906 and 924–937; these read GKTS…SSQG and KPVS…QQDI. Ser976 is subject to Phosphoserine. Composition is skewed to polar residues over residues 1033 to 1042, 1054 to 1064, and 1082 to 1105; these read AVSSKETSSG, TPATTVDNGTS, and AASN…SGPK. The interval 1059–1129 is sufficient for interaction with AGO2; that stretch reads VDNGTSAWGK…GSRPTGWEEE (71 aa). Low complexity predominate over residues 1143–1163; that stretch reads QELNSSLNWPPYTKKMSSKGL. Residues Ser1197 and Ser1255 each carry the phosphoserine modification. 3 disordered regions span residues 1234 to 1256, 1273 to 1306, and 1360 to 1395; these read GDYN…ESSM, VGNT…PPPL, and QRAQ…QSRQ. Composition is skewed to low complexity over residues 1284 to 1296 and 1360 to 1376; these read QQPP…SSQP and QRAQ…RQQQ. Thr1406 carries the phosphothreonine modification. Disordered stretches follow at residues 1512 to 1570 and 1659 to 1685; these read MNSS…VTPG and PKNI…WDNS. Ser1520 bears the Phosphoserine mark. Residues 1605–1896 are sufficient for interaction with AGO2; sequence TSAWSSIRAS…DHLGGGGESM (292 aa). The region spanning 1716–1788 is the RRM domain; sequence NWLVLKNLTP…TTILAEFASE (73 aa). Ser1804 and Ser1825 each carry phosphoserine.

Belongs to the GW182 family. In terms of assembly, interacts with AGO2. Interacts with AGO1, AGO3 and AGO4. Interacts with CNOT1; the interaction is direct and mediates the association with the CCR4-NOT complex. Interacts with ZC3H12A. Interacts with SND1. Interacts with GARRE1.

It is found in the cytoplasm. The protein resides in the P-body. Functionally, plays a role in RNA-mediated gene silencing by both micro-RNAs (miRNAs) and short interfering RNAs (siRNAs). Required for miRNA-dependent repression of translation and for siRNA-dependent endonucleolytic cleavage of complementary mRNAs by argonaute family proteins. As a scaffolding protein, associates with argonaute proteins bound to partially complementary mRNAs, and can simultaneously recruit CCR4-NOT and PAN deadenylase complexes. The polypeptide is Trinucleotide repeat-containing gene 6A protein (Tnrc6a) (Mus musculus (Mouse)).